Reading from the N-terminus, the 702-residue chain is Ribosomal RNA large subunit methyltransferase K/L (702 aa).

Residues 43–154 (LVYQSLMWSR…KETASIALDL (112 aa)) enclose the THUMP domain.

The protein belongs to the methyltransferase superfamily. RlmKL family.

Its subcellular location is the cytoplasm. It carries out the reaction guanosine(2445) in 23S rRNA + S-adenosyl-L-methionine = N(2)-methylguanosine(2445) in 23S rRNA + S-adenosyl-L-homocysteine + H(+). The enzyme catalyses guanosine(2069) in 23S rRNA + S-adenosyl-L-methionine = N(2)-methylguanosine(2069) in 23S rRNA + S-adenosyl-L-homocysteine + H(+). Its function is as follows. Specifically methylates the guanine in position 2445 (m2G2445) and the guanine in position 2069 (m7G2069) of 23S rRNA. The polypeptide is Ribosomal RNA large subunit methyltransferase K/L (Escherichia coli O6:K15:H31 (strain 536 / UPEC)).